Consider the following 205-residue polypeptide: Meiotic nuclear division protein 1 homolog (205 aa).

S2 is subject to N-acetylserine. A coiled-coil region spans residues 83–173 (KRKLEALNSQ…EAANRWTDNI (91 aa)).

This sequence belongs to the MND1 family. As to quaternary structure, heterodimer with PSMC3IP/HOP2. MND1-PSMC3IP interacts with DMC1 and RAD51 and binds to ssDNA and dsDNA showing no preference for either form of DNA.

The protein localises to the nucleus. In terms of biological role, required for proper homologous chromosome pairing and efficient cross-over and intragenic recombination during meiosis. Stimulates both DMC1- and RAD51-mediated homologous strand assimilation, which is required for the resolution of meiotic double-strand breaks. This chain is Meiotic nuclear division protein 1 homolog, found in Mus musculus (Mouse).